Consider the following 122-residue polypeptide: ATP synthase epsilon chain (122 aa).

This sequence belongs to the ATPase epsilon chain family. F-type ATPases have 2 components, CF(1) - the catalytic core - and CF(0) - the membrane proton channel. CF(1) has five subunits: alpha(3), beta(3), gamma(1), delta(1), epsilon(1). CF(0) has three main subunits: a, b and c.

It is found in the cell membrane. Produces ATP from ADP in the presence of a proton gradient across the membrane. This is ATP synthase epsilon chain from Rhodococcus erythropolis (strain PR4 / NBRC 100887).